Reading from the N-terminus, the 230-residue chain is Fibrillarin-like rRNA/tRNA 2'-O-methyltransferase (230 aa).

S-adenosyl-L-methionine is bound by residues 87–88, 105–106, 130–131, and 150–153; these read TT, EF, DA, and DVAQ.

Belongs to the methyltransferase superfamily. Fibrillarin family. Interacts with nop5. Component of box C/D small ribonucleoprotein (sRNP) particles that contain rpl7ae, FlpA and nop5, plus a guide RNA.

In terms of biological role, involved in pre-rRNA and tRNA processing. Utilizes the methyl donor S-adenosyl-L-methionine to catalyze the site-specific 2'-hydroxyl methylation of ribose moieties in rRNA and tRNA. Site specificity is provided by a guide RNA that base pairs with the substrate. Methylation occurs at a characteristic distance from the sequence involved in base pairing with the guide RNA. The protein is Fibrillarin-like rRNA/tRNA 2'-O-methyltransferase of Methanococcus maripaludis (strain C6 / ATCC BAA-1332).